A 300-amino-acid polypeptide reads, in one-letter code: B1 kinase (300 aa).

Residues 16–282 enclose the Protein kinase domain; sequence WVVGPLIGKG…ITMVNSLTYF (267 aa). ATP is bound by residues 22–30 and Lys45; that span reads IGKGGFGSI. The active-site Proton acceptor is the Asp147.

It belongs to the protein kinase superfamily. Ser/Thr protein kinase family. Poxviruses subfamily. In terms of assembly, interacts with host JIP1; this interaction increases the amount of MAPK bound to JIP1 and subsequently increases the activity of transcription factors, such as JUN, that respond to these complexes. Interacts with protein OPG198; this interaction inhibits the repressive activity of OPG198 pseudokinase on viral replication factory formation. Mg(2+) serves as cofactor. Post-translationally, autophosphorylated.

The protein resides in the virion. The protein localises to the host cytoplasm. The enzyme catalyses L-seryl-[protein] + ATP = O-phospho-L-seryl-[protein] + ADP + H(+). It carries out the reaction L-threonyl-[protein] + ATP = O-phospho-L-threonyl-[protein] + ADP + H(+). In terms of biological role, essential serine/threonine-protein kinase that plays different role in the viral life cycle. Phosphorylates the host small ribosomal protein RACK1 thereby customizing the ribosomes to a state optimal for viral mRNAs (which contain poly-A leaders) but not for host mRNAs. Facilitates viral DNA replication by inhibiting host BANF1, a cellular host defense responsive to foreign DNA. Phosphorylates host BANF1 on serine and threonine residues; this leads to BANF1 relocalization to the cytoplasm, loss of dimerization and impaired DNA binding activity. Indeed, BANF1 activity depends on its DNA-binding property which is blocked by VPK1-mediated phosphorylation. Required for viral intermediate genes expression, probably by inhibiting host BANF1. Modulates cellular responses via host JUN by two different mechanisms, either by direct phosphorylation or by modulation of upstream JIP1-MAPK complexes. Seems to participate in the accumulation/processing of late proteins and thus in virion maturation. In addition, inhibits B12 repressive activity on viral DNA replication via a phosphorylation-dependent mechanism. The sequence is that of B1 kinase (OPG187) from Vaccinia virus (strain Ankara) (VACV).